The primary structure comprises 185 residues: Potassium-transporting ATPase KdpC subunit (185 aa).

A helical membrane pass occupies residues 14–34 (ALSLLTGVAYPLALTGIAAVI).

The protein belongs to the KdpC family. In terms of assembly, the system is composed of three essential subunits: KdpA, KdpB and KdpC.

The protein resides in the cell inner membrane. Functionally, part of the high-affinity ATP-driven potassium transport (or Kdp) system, which catalyzes the hydrolysis of ATP coupled with the electrogenic transport of potassium into the cytoplasm. This subunit acts as a catalytic chaperone that increases the ATP-binding affinity of the ATP-hydrolyzing subunit KdpB by the formation of a transient KdpB/KdpC/ATP ternary complex. This Cereibacter sphaeroides (strain KD131 / KCTC 12085) (Rhodobacter sphaeroides) protein is Potassium-transporting ATPase KdpC subunit.